The primary structure comprises 347 residues: GMP reductase (347 aa).

108–131 (ADFQKTKDIMALTDDLIFICVDIA) is an NADP(+) binding site. Positions 181 and 183 each coordinate K(+). Cys-186 serves as the catalytic Thioimidate intermediate. 216-239 (IIGDGGCSCAGDVSKAFGGGADFV) contributes to the NADP(+) binding site.

Belongs to the IMPDH/GMPR family. GuaC type 1 subfamily. In terms of assembly, homotetramer.

It catalyses the reaction IMP + NH4(+) + NADP(+) = GMP + NADPH + 2 H(+). Its function is as follows. Catalyzes the irreversible NADPH-dependent deamination of GMP to IMP. It functions in the conversion of nucleobase, nucleoside and nucleotide derivatives of G to A nucleotides, and in maintaining the intracellular balance of A and G nucleotides. The polypeptide is GMP reductase (Aliivibrio salmonicida (strain LFI1238) (Vibrio salmonicida (strain LFI1238))).